The primary structure comprises 463 residues: Glycine--tRNA ligase (463 aa).

Substrate is bound by residues R98 and E174. Residues 206–208 (RNE), 216–221 (FRTREF), 290–291 (EL), and 334–337 (GADR) contribute to the ATP site. 221–225 (FEQME) contacts substrate. 330-334 (EPSLG) contributes to the substrate binding site.

It belongs to the class-II aminoacyl-tRNA synthetase family. In terms of assembly, homodimer.

It is found in the cytoplasm. It catalyses the reaction tRNA(Gly) + glycine + ATP = glycyl-tRNA(Gly) + AMP + diphosphate. Functionally, catalyzes the attachment of glycine to tRNA(Gly). The polypeptide is Glycine--tRNA ligase (Staphylococcus saprophyticus subsp. saprophyticus (strain ATCC 15305 / DSM 20229 / NCIMB 8711 / NCTC 7292 / S-41)).